A 188-amino-acid chain; its full sequence is Oleosin S2-2 (188 aa).

Ala-2 is subject to N-acetylalanine. A polar region spans residues 2 to 51; that stretch reads ATVERRVQVDPTDKRIHLQPQYEGDVGYGYGYGGRADYKSSGPSSNQIVA. The next 3 membrane-spanning stretches (helical) occupy residues 49–69, 74–94, and 96–116; these read IVALIVGVPVGGSLLALAGLT, VIGLMLSVPLFLLFSPVIVPA, and ITIGLAVTAILASGLFGLTGL. Positions 52–125 are hydrophobic; it reads LIVGVPVGGS…LSSVSWVLNY (74 aa). Residues 164–188 form a disordered region; the sequence is DKAHEAHDTSLTTETTEPGKTRRHT. The span at 172-181 shows a compositional bias: polar residues; it reads TSLTTETTEP.

This sequence belongs to the oleosin family.

It localises to the lipid droplet. It is found in the membrane. May have a structural role to stabilize the lipid body during desiccation of the seed by preventing coalescence of the oil. Probably interacts with both lipid and phospholipid moieties of lipid bodies. May also provide recognition signals for specific lipase anchorage in lipolysis during seedling growth. The polypeptide is Oleosin S2-2 (S2) (Brassica napus (Rape)).